We begin with the raw amino-acid sequence, 861 residues long: Leucine--tRNA ligase (861 aa).

The short motif at 42 to 52 is the 'HIGH' region element; it reads PYPSGRLHMGH. The 'KMSKS' region signature appears at 619 to 623; it reads KMSKS. Residue K622 coordinates ATP.

This sequence belongs to the class-I aminoacyl-tRNA synthetase family.

Its subcellular location is the cytoplasm. The catalysed reaction is tRNA(Leu) + L-leucine + ATP = L-leucyl-tRNA(Leu) + AMP + diphosphate. This chain is Leucine--tRNA ligase, found in Haemophilus influenzae (strain PittEE).